The chain runs to 178 residues: Large ribosomal subunit protein uL6 (178 aa).

This sequence belongs to the universal ribosomal protein uL6 family. As to quaternary structure, part of the 50S ribosomal subunit.

This protein binds to the 23S rRNA, and is important in its secondary structure. It is located near the subunit interface in the base of the L7/L12 stalk, and near the tRNA binding site of the peptidyltransferase center. The sequence is that of Large ribosomal subunit protein uL6 from Nitrosococcus oceani (strain ATCC 19707 / BCRC 17464 / JCM 30415 / NCIMB 11848 / C-107).